The sequence spans 638 residues: LEAF RUST 10 DISEASE-RESISTANCE LOCUS RECEPTOR-LIKE PROTEIN KINASE-like 2.1 (638 aa).

The signal sequence occupies residues 1–29 (MINLSLYQTNSLSYTIIWMLFVIPSCVLS). The Extracellular portion of the chain corresponds to 30–264 (VDERQKHCSP…EHTCGKMGIG (235 aa)). Residues asparagine 69, asparagine 114, asparagine 136, asparagine 204, and asparagine 239 are each glycosylated (N-linked (GlcNAc...) asparagine). The helical transmembrane segment at 265-285 (IGLGCGFLGATLITVCLLCFF) threads the bilayer. Residues 286–638 (FQKRRTSHHL…YTEVFIGSTS (353 aa)) lie on the Cytoplasmic side of the membrane. The region spanning 321-609 (KLFSHTLGKG…VLEVPPKPSI (289 aa)) is the Protein kinase domain. Residues 327-335 (LGKGGFGTV) and lysine 349 contribute to the ATP site. Tyrosine 393 carries the post-translational modification Phosphotyrosine. Residue aspartate 444 is the Proton acceptor of the active site. Threonine 484 carries the post-translational modification Phosphothreonine.

The protein belongs to the protein kinase superfamily. Ser/Thr protein kinase family.

It localises to the membrane. The enzyme catalyses L-seryl-[protein] + ATP = O-phospho-L-seryl-[protein] + ADP + H(+). It catalyses the reaction L-threonyl-[protein] + ATP = O-phospho-L-threonyl-[protein] + ADP + H(+). This Arabidopsis thaliana (Mouse-ear cress) protein is LEAF RUST 10 DISEASE-RESISTANCE LOCUS RECEPTOR-LIKE PROTEIN KINASE-like 2.1.